The chain runs to 398 residues: Subtilisin-like protease CPC735_050320 (398 aa).

An N-terminal signal peptide occupies residues 1-19; the sequence is MVFLGKILPLALAALSVNG. Positions 20–117 are excised as a propeptide; sequence AEILSAPGAE…IERDQIMKAS (98 aa). One can recognise an Inhibitor I9 domain in the interval 35–115; it reads YIVVMKEGTS…AYIERDQIMK (81 aa). The 272-residue stretch at 127–398 folds into the Peptidase S8 domain; sequence SWGLARVSSR…NRLINNGVSQ (272 aa). Residues Asp-159 and His-190 each act as charge relay system in the active site. Residues Asn-220 and Asn-250 are each glycosylated (N-linked (GlcNAc...) asparagine). The active-site Charge relay system is Ser-344.

It belongs to the peptidase S8 family.

The protein localises to the secreted. Its function is as follows. Secreted subtilisin-like serine protease with keratinolytic activity that contributes to pathogenicity. The chain is Subtilisin-like protease CPC735_050320 from Coccidioides posadasii (strain C735) (Valley fever fungus).